Reading from the N-terminus, the 431-residue chain is Glutamate-1-semialdehyde 2,1-aminomutase (431 aa).

The residue at position 269 (lysine 269) is an N6-(pyridoxal phosphate)lysine.

This sequence belongs to the class-III pyridoxal-phosphate-dependent aminotransferase family. HemL subfamily. In terms of assembly, homodimer. Pyridoxal 5'-phosphate serves as cofactor.

Its subcellular location is the cytoplasm. The catalysed reaction is (S)-4-amino-5-oxopentanoate = 5-aminolevulinate. Its pathway is porphyrin-containing compound metabolism; protoporphyrin-IX biosynthesis; 5-aminolevulinate from L-glutamyl-tRNA(Glu): step 2/2. This Francisella tularensis subsp. tularensis (strain SCHU S4 / Schu 4) protein is Glutamate-1-semialdehyde 2,1-aminomutase.